We begin with the raw amino-acid sequence, 306 residues long: UDP-N-acetylenolpyruvoylglucosamine reductase (306 aa).

The 165-residue stretch at 33–197 folds into the FAD-binding PCMH-type domain; sequence TGGEADFYLS…LEAAFTLEPG (165 aa). The active site involves Arg176. The Proton donor role is filled by Ser226. Residue Glu296 is part of the active site.

It belongs to the MurB family. The cofactor is FAD.

It localises to the cytoplasm. It carries out the reaction UDP-N-acetyl-alpha-D-muramate + NADP(+) = UDP-N-acetyl-3-O-(1-carboxyvinyl)-alpha-D-glucosamine + NADPH + H(+). The protein operates within cell wall biogenesis; peptidoglycan biosynthesis. Its function is as follows. Cell wall formation. The polypeptide is UDP-N-acetylenolpyruvoylglucosamine reductase (Staphylococcus epidermidis (strain ATCC 35984 / DSM 28319 / BCRC 17069 / CCUG 31568 / BM 3577 / RP62A)).